We begin with the raw amino-acid sequence, 207 residues long: Large ribosomal subunit protein uL4 (207 aa).

Residues 53 to 76 (TVSEVSGTTKKPFKQKGTGNARQG) are disordered.

The protein belongs to the universal ribosomal protein uL4 family. In terms of assembly, part of the 50S ribosomal subunit.

In terms of biological role, one of the primary rRNA binding proteins, this protein initially binds near the 5'-end of the 23S rRNA. It is important during the early stages of 50S assembly. It makes multiple contacts with different domains of the 23S rRNA in the assembled 50S subunit and ribosome. Its function is as follows. Forms part of the polypeptide exit tunnel. This Rickettsia bellii (strain OSU 85-389) protein is Large ribosomal subunit protein uL4.